We begin with the raw amino-acid sequence, 246 residues long: Anamorsin homolog (246 aa).

An N-terminal SAM-like domain region spans residues 1-124 (MRVVVVDLDG…ARGTAFSLKS (124 aa)). Residues 125–158 (RAVRVVTADAGWGADADVDDELIDESALLTELDV) form a linker region. [2Fe-2S] cluster-binding residues include Cys168, Cys177, Cys180, and Cys182. The segment at 168–182 (CDVGAGKKACKNCTC) is fe-S binding site A. [4Fe-4S] cluster contacts are provided by Cys206, Cys209, Cys217, and Cys220. 2 consecutive short sequence motifs (cx2C motif) follow at residues 206–209 (CGNC) and 217–220 (CAGC). The interval 206 to 220 (CGNCALGDAFRCAGC) is fe-S binding site B.

Belongs to the anamorsin family. As to quaternary structure, monomer. The cofactor is [2Fe-2S] cluster. It depends on [4Fe-4S] cluster as a cofactor.

Its subcellular location is the cytoplasm. The protein resides in the mitochondrion intermembrane space. Component of the cytosolic iron-sulfur (Fe-S) protein assembly (CIA) machinery. Required for the maturation of extramitochondrial Fe-S proteins. Part of an electron transfer chain functioning in an early step of cytosolic Fe-S biogenesis, facilitating the de novo assembly of a [4Fe-4S] cluster on the cytosolic Fe-S scaffold complex. Electrons are transferred from NADPH via a FAD- and FMN-containing diflavin oxidoreductase. Together with the diflavin oxidoreductase, also required for the assembly of the diferric tyrosyl radical cofactor of ribonucleotide reductase (RNR), probably by providing electrons for reduction during radical cofactor maturation in the catalytic small subunit. The protein is Anamorsin homolog of Ostreococcus tauri.